Consider the following 442-residue polypeptide: GTPase Der (442 aa).

EngA-type G domains follow at residues Pro4 to Asn169 and Ile178 to Thr353. Residues Gly10–Ser17, Asp57–Leu61, Asn121–Glu124, Gly184–Ser191, Asp231–Met235, and Asn296–Asp299 contribute to the GTP site. The KH-like domain occupies Arg354 to Glu438.

It belongs to the TRAFAC class TrmE-Era-EngA-EngB-Septin-like GTPase superfamily. EngA (Der) GTPase family. As to quaternary structure, associates with the 50S ribosomal subunit.

Functionally, GTPase that plays an essential role in the late steps of ribosome biogenesis. This is GTPase Der from Heliobacterium modesticaldum (strain ATCC 51547 / Ice1).